Reading from the N-terminus, the 587-residue chain is 5-aminolevulinate synthase, erythroid-specific, mitochondrial (587 aa).

The N-terminal 49 residues, 1-49, are a transit peptide targeting the mitochondrion; that stretch reads MVAAAMLLRSCPVLSQGPTGLLGKVAKTYQFLFSIGRCPILATQGPTCS. Arg-163 serves as a coordination point for succinyl-CoA. Residues Cys-258 and Phe-259 each coordinate pyridoxal 5'-phosphate. Ser-280 and Lys-299 together coordinate succinyl-CoA. Positions 332, 360, and 388 each coordinate pyridoxal 5'-phosphate. Lys-391 is a catalytic residue. Residue Lys-391 is modified to N6-(pyridoxal phosphate)lysine. Pyridoxal 5'-phosphate is bound by residues Thr-420 and Thr-421. A succinyl-CoA-binding site is contributed by Thr-508.

The protein belongs to the class-II pyridoxal-phosphate-dependent aminotransferase family. In terms of assembly, homodimer. Interacts with SUCLA2. It depends on pyridoxal 5'-phosphate as a cofactor. In terms of tissue distribution, predomnantly expressed in erythroid cells.

Its subcellular location is the mitochondrion inner membrane. The protein resides in the mitochondrion. It carries out the reaction succinyl-CoA + glycine + H(+) = 5-aminolevulinate + CO2 + CoA. It functions in the pathway porphyrin-containing compound metabolism; protoporphyrin-IX biosynthesis; 5-aminolevulinate from glycine: step 1/1. Its function is as follows. Catalyzes the pyridoxal 5'-phosphate (PLP)-dependent condensation of succinyl-CoA and glycine to form aminolevulinic acid (ALA), with CoA and CO2 as by-products. Contributes significantly to heme formation during erythropoiesis. This chain is 5-aminolevulinate synthase, erythroid-specific, mitochondrial (Alas2), found in Mus musculus (Mouse).